The following is a 274-amino-acid chain: NADPH-dependent 7-cyano-7-deazaguanine reductase (274 aa).

80 to 82 (VES) is a substrate binding site. 82–83 (SK) provides a ligand contact to NADPH. Cysteine 181 functions as the Thioimide intermediate in the catalytic mechanism. Catalysis depends on aspartate 188, which acts as the Proton donor. 220-221 (HE) contacts substrate. Position 249-250 (249-250 (RG)) interacts with NADPH.

The protein belongs to the GTP cyclohydrolase I family. QueF type 2 subfamily. As to quaternary structure, homodimer.

The protein localises to the cytoplasm. It catalyses the reaction 7-aminomethyl-7-carbaguanine + 2 NADP(+) = 7-cyano-7-deazaguanine + 2 NADPH + 3 H(+). It participates in tRNA modification; tRNA-queuosine biosynthesis. In terms of biological role, catalyzes the NADPH-dependent reduction of 7-cyano-7-deazaguanine (preQ0) to 7-aminomethyl-7-deazaguanine (preQ1). This Burkholderia pseudomallei (strain 1106a) protein is NADPH-dependent 7-cyano-7-deazaguanine reductase.